Here is a 269-residue protein sequence, read N- to C-terminus: Tryptophan synthase alpha chain (269 aa).

Active-site proton acceptor residues include E49 and D60.

The protein belongs to the TrpA family. As to quaternary structure, tetramer of two alpha and two beta chains.

It carries out the reaction (1S,2R)-1-C-(indol-3-yl)glycerol 3-phosphate + L-serine = D-glyceraldehyde 3-phosphate + L-tryptophan + H2O. It participates in amino-acid biosynthesis; L-tryptophan biosynthesis; L-tryptophan from chorismate: step 5/5. Functionally, the alpha subunit is responsible for the aldol cleavage of indoleglycerol phosphate to indole and glyceraldehyde 3-phosphate. This Actinobacillus succinogenes (strain ATCC 55618 / DSM 22257 / CCUG 43843 / 130Z) protein is Tryptophan synthase alpha chain.